Reading from the N-terminus, the 315-residue chain is Protoheme IX farnesyltransferase 1 (315 aa).

8 helical membrane-spanning segments follow: residues 30-50, 56-76, 106-126, 132-152, 162-182, 186-206, 249-269, and 289-309; these read PGII…AWIQ, GGPG…LVMA, IPPP…FIML, LTAV…TLWF, VGSF…TGYI, AILL…AIGI, LYID…AIWL, and FFYS…DSFI.

Belongs to the UbiA prenyltransferase family. Protoheme IX farnesyltransferase subfamily. In terms of assembly, interacts with CtaA.

It localises to the cell membrane. It carries out the reaction heme b + (2E,6E)-farnesyl diphosphate + H2O = Fe(II)-heme o + diphosphate. It participates in porphyrin-containing compound metabolism; heme O biosynthesis; heme O from protoheme: step 1/1. In terms of biological role, converts heme B (protoheme IX) to heme O by substitution of the vinyl group on carbon 2 of heme B porphyrin ring with a hydroxyethyl farnesyl side group. The polypeptide is Protoheme IX farnesyltransferase 1 (Bacillus velezensis (strain DSM 23117 / BGSC 10A6 / LMG 26770 / FZB42) (Bacillus amyloliquefaciens subsp. plantarum)).